A 101-amino-acid polypeptide reads, in one-letter code: Small ribosomal subunit protein bS18c (101 aa).

Belongs to the bacterial ribosomal protein bS18 family. Part of the 30S ribosomal subunit.

The protein localises to the plastid. It localises to the chloroplast. The polypeptide is Small ribosomal subunit protein bS18c (Lactuca sativa (Garden lettuce)).